A 173-amino-acid polypeptide reads, in one-letter code: Photosystem I assembly protein Ycf3 (173 aa).

TPR repeat units follow at residues 35–68 (AYVYYRDGLSAQNDGDYAEALENYEESLKLEENA), 72–105 (GETLKNIAIIYMSNGEEERALETYQKALDENPKQ), and 120–153 (GRTAEEEGRRDDADGWFDQAANVWTQAVRLNPGG).

It belongs to the Ycf3 family.

The protein localises to the cellular thylakoid membrane. Essential for the assembly of the photosystem I (PSI) complex. May act as a chaperone-like factor to guide the assembly of the PSI subunits. This is Photosystem I assembly protein Ycf3 from Synechococcus sp. (strain CC9311).